A 694-amino-acid chain; its full sequence is DNA polymerase eta (694 aa).

A UmuC domain is found at 9-258 (VALVDMDCFF…MPIRKIRSLG (250 aa)). Residues Asp-13 and Met-14 each contribute to the Mg(2+) site. Mn(2+)-binding residues include Asp-13 and Met-14. Arg-61 contacts a 2'-deoxyribonucleoside 5'-triphosphate. Residues Asp-115 and Glu-116 each contribute to the Mg(2+) site. Mn(2+)-binding residues include Asp-115 and Glu-116. Glu-116 is a catalytic residue. Residues 565-598 (DSGPDDGAVKPVSSKAVSTEMNVAGDSPNVLDSP) are disordered. The UBZ3-type zinc-finger motif lies at 609-643 (ATEDQVLCEKCDSLVPVWDMPEHTDYHFALELQKS). Zn(2+)-binding residues include Cys-616, Cys-619, His-631, and His-635. The segment at 651–694 (KPQAIPAVSPQGKRNPKSPSASSSKRLRPHGMQTLESFFKPLTH) is disordered. Glycyl lysine isopeptide (Lys-Gly) (interchain with G-Cter in ubiquitin) cross-links involve residues Lys-663, Lys-667, and Lys-675. The PIP-box motif lies at 682 to 689 (MQTLESFF). Lys-690 is covalently cross-linked (Glycyl lysine isopeptide (Lys-Gly) (interchain with G-Cter in ubiquitin)).

This sequence belongs to the DNA polymerase type-Y family. As to quaternary structure, interacts with REV1. Interacts with monoubiquitinated PCNA, but not unmodified PCNA. Interacts with POLI; this interaction targets POLI to the replication machinery. Interacts with PALB2 and BRCA2; the interactions are direct and are required to sustain the recruitment of POLH at blocked replication forks and to stimulate POLH-dependent DNA synthesis on D loop substrates. Interacts (via C-terminus) with TRAIP. Interacts with ubiquitin. Interacts with POLDIP2. Requires Mg(2+) as cofactor. Mn(2+) serves as cofactor. In terms of processing, monoubiquitinated by RCHY1/PIRH2. Ubiquitination depends on integrity of the UBZ3-type zinc finger domain and is enhanced by TRAIP. Ubiquitination inhibits the ability of PolH to interact with PCNA and to bypass UV-induced lesions. As to expression, ubiquitous.

It localises to the nucleus. It carries out the reaction DNA(n) + a 2'-deoxyribonucleoside 5'-triphosphate = DNA(n+1) + diphosphate. With respect to regulation, the enzyme in complex with the DNA substrate binds a third divalent metal cation. The binding of this third divalent cation, which is coordinated by water molecules and two oxygen atoms from DNA and dNTP, is essential for catalyzing the DNA synthesis. In terms of biological role, DNA polymerase specifically involved in the DNA repair by translesion synthesis (TLS). Due to low processivity on both damaged and normal DNA, cooperates with the heterotetrameric (REV3L, REV7, POLD2 and POLD3) POLZ complex for complete bypass of DNA lesions. Inserts one or 2 nucleotide(s) opposite the lesion, the primer is further extended by the tetrameric POLZ complex. In the case of 1,2-intrastrand d(GpG)-cisplatin cross-link, inserts dCTP opposite the 3' guanine. Particularly important for the repair of UV-induced pyrimidine dimers. Although inserts the correct base, may cause base transitions and transversions depending upon the context. May play a role in hypermutation at immunoglobulin genes. Forms a Schiff base with 5'-deoxyribose phosphate at abasic sites, but does not have any lyase activity, preventing the release of the 5'-deoxyribose phosphate (5'-dRP) residue. This covalent trapping of the enzyme by the 5'-dRP residue inhibits its DNA synthetic activity during base excision repair, thereby avoiding high incidence of mutagenesis. Targets POLI to replication foci. The polypeptide is DNA polymerase eta (Polh) (Mus musculus (Mouse)).